The following is a 139-amino-acid chain: 3-hydroxyacyl-[acyl-carrier-protein] dehydratase FabZ (139 aa).

Histidine 46 is a catalytic residue.

Belongs to the thioester dehydratase family. FabZ subfamily.

The protein resides in the cytoplasm. The enzyme catalyses a (3R)-hydroxyacyl-[ACP] = a (2E)-enoyl-[ACP] + H2O. Functionally, involved in unsaturated fatty acids biosynthesis. Catalyzes the dehydration of short chain beta-hydroxyacyl-ACPs and long chain saturated and unsaturated beta-hydroxyacyl-ACPs. This chain is 3-hydroxyacyl-[acyl-carrier-protein] dehydratase FabZ, found in Streptococcus pyogenes serotype M3 (strain ATCC BAA-595 / MGAS315).